The sequence spans 261 residues: MSYQYVNVVTINKVAVIEFNYGRKLNALSKVFIDDLMQALSDLNRPEIRCIILRAPSGSKVFSAGHDIHELPSGGRDPLSYDDPLRQITRMIQKFPKPIISMVEGSVWGGAFEMIMSSDLIIAASTSTFSMTPVNLGVPYNLVGIHNLTRDAGFHIVKELIFTASPITAQRALAVGILNHVVEVEELEDFTLQMAHHISEKAPLAIAVIKEELRVLGEAHTMNSDEFERIQGMRRAVYDSEDYQEGMNAFLEKRKPNFVGH.

Residues 64-68, glycine 110, threonine 132, and lysine 253 contribute to the substrate site; that span reads AGHDI.

The protein belongs to the enoyl-CoA hydratase/isomerase family. Dimer of homotrimers.

The enzyme catalyses (R)-methylmalonyl-CoA + H(+) = propanoyl-CoA + CO2. Catalyzes the decarboxylation of (R)-methylmalonyl-CoA to propionyl-CoA. Could be part of a pathway that converts succinate to propanoate. The protein is Methylmalonyl-CoA decarboxylase (scpB) of Escherichia coli (strain K12).